A 373-amino-acid polypeptide reads, in one-letter code: Muscleblind-like protein 2 (373 aa).

4 C3H1-type zinc fingers span residues 13-41 (WLTLEVCRQFQRGTCSRSDEECKFAHPPK), 47-73 (NGRVIACFDSLKGRCSRENCKYLHPPT), 176-204 (TDKLEVCREFQRGNCARGETDCRFAHPAD), and 212-238 (DNTVTVCMDYIKGRCMREKCKYFHPPA).

Belongs to the muscleblind family. As to quaternary structure, interacts with ITGA3. In terms of tissue distribution, expressed in heart, brain, placenta, lung, liver, skeletal muscle, kidney and pancreas.

It is found in the nucleus. It localises to the cytoplasm. Functionally, mediates pre-mRNA alternative splicing regulation. Acts either as activator or repressor of splicing on specific pre-mRNA targets. Inhibits cardiac troponin-T (TNNT2) pre-mRNA exon inclusion but induces insulin receptor (IR) pre-mRNA exon inclusion in muscle. Antagonizes the alternative splicing activity pattern of CELF proteins. RNA-binding protein that binds to 5'ACACCC-3' core sequence, termed zipcode, within the 3'UTR of ITGA3. Binds to CUG triplet repeat expansion in myotonic dystrophy muscle cells by sequestering the target RNAs. Together with RNA binding proteins RBPMS and RBFOX2, activates vascular smooth muscle cells alternative splicing events. Regulates NCOR2 alternative splicing. Seems to regulate expression and localization of ITGA3 by transporting it from the nucleus to cytoplasm at adhesion plaques. May play a role in myotonic dystrophy pathophysiology (DM). The polypeptide is Muscleblind-like protein 2 (MBNL2) (Homo sapiens (Human)).